The primary structure comprises 304 residues: tRNA pseudouridine synthase B (304 aa).

Asp48 functions as the Nucleophile in the catalytic mechanism.

It belongs to the pseudouridine synthase TruB family. Type 1 subfamily.

The enzyme catalyses uridine(55) in tRNA = pseudouridine(55) in tRNA. Functionally, responsible for synthesis of pseudouridine from uracil-55 in the psi GC loop of transfer RNAs. This Pseudomonas aeruginosa (strain UCBPP-PA14) protein is tRNA pseudouridine synthase B.